Reading from the N-terminus, the 125-residue chain is MAVSKEDILGAIADMSVMDLVELIEAMEEKFGVTAAAAVAAAPAAAGGDAAAAEEQTEFDVVLSSFGDKKVGVIKAVREVTGLGLKEAKELVESAPAPVKEGATKDEAEEIKKKIEEAGGTAELK.

The interval 96-125 is disordered; sequence PAPVKEGATKDEAEEIKKKIEEAGGTAELK. The span at 102–117 shows a compositional bias: basic and acidic residues; the sequence is GATKDEAEEIKKKIEE.

Belongs to the bacterial ribosomal protein bL12 family. Homodimer. Part of the ribosomal stalk of the 50S ribosomal subunit. Forms a multimeric L10(L12)X complex, where L10 forms an elongated spine to which 2 to 4 L12 dimers bind in a sequential fashion. Binds GTP-bound translation factors.

Its function is as follows. Forms part of the ribosomal stalk which helps the ribosome interact with GTP-bound translation factors. Is thus essential for accurate translation. In Alcanivorax borkumensis (strain ATCC 700651 / DSM 11573 / NCIMB 13689 / SK2), this protein is Large ribosomal subunit protein bL12.